A 52-amino-acid chain; its full sequence is uncharacterized protein (52 aa).

A coiled-coil region spans residues 3–46; that stretch reads KIQLESSNQSVLKLEERRLNLTAEIERIYGQMDLKRKELENANL.

This is an uncharacterized protein from Dictyostelium discoideum (Social amoeba).